The primary structure comprises 312 residues: Putative S-adenosyl-L-methionine-dependent methyltransferase BCG_1768c (312 aa).

S-adenosyl-L-methionine-binding positions include Asp-130 and 159–160 (DL).

Belongs to the UPF0677 family.

In terms of biological role, exhibits S-adenosyl-L-methionine-dependent methyltransferase activity. The protein is Putative S-adenosyl-L-methionine-dependent methyltransferase BCG_1768c of Mycobacterium bovis (strain BCG / Pasteur 1173P2).